The following is a 324-amino-acid chain: Methionyl-tRNA formyltransferase (324 aa).

113-116 provides a ligand contact to (6S)-5,6,7,8-tetrahydrofolate; that stretch reads SLLP.

It belongs to the Fmt family.

It carries out the reaction L-methionyl-tRNA(fMet) + (6R)-10-formyltetrahydrofolate = N-formyl-L-methionyl-tRNA(fMet) + (6S)-5,6,7,8-tetrahydrofolate + H(+). Its function is as follows. Attaches a formyl group to the free amino group of methionyl-tRNA(fMet). The formyl group appears to play a dual role in the initiator identity of N-formylmethionyl-tRNA by promoting its recognition by IF2 and preventing the misappropriation of this tRNA by the elongation apparatus. The polypeptide is Methionyl-tRNA formyltransferase (Bacteroides fragilis (strain ATCC 25285 / DSM 2151 / CCUG 4856 / JCM 11019 / LMG 10263 / NCTC 9343 / Onslow / VPI 2553 / EN-2)).